We begin with the raw amino-acid sequence, 258 residues long: Glucosamine-6-phosphate deaminase (258 aa).

Asp65 serves as the catalytic Proton acceptor; for enolization step. The active-site For ring-opening step is Asp134. The Proton acceptor; for ring-opening step role is filled by His136. The active-site For ring-opening step is Glu141.

Belongs to the glucosamine/galactosamine-6-phosphate isomerase family. NagB subfamily.

The enzyme catalyses alpha-D-glucosamine 6-phosphate + H2O = beta-D-fructose 6-phosphate + NH4(+). The protein operates within amino-sugar metabolism; N-acetylneuraminate degradation; D-fructose 6-phosphate from N-acetylneuraminate: step 5/5. In terms of biological role, catalyzes the reversible isomerization-deamination of glucosamine 6-phosphate (GlcN6P) to form fructose 6-phosphate (Fru6P) and ammonium ion. This is Glucosamine-6-phosphate deaminase from Corynebacterium kroppenstedtii (strain DSM 44385 / JCM 11950 / CIP 105744 / CCUG 35717).